The following is a 306-amino-acid chain: Cilia- and flagella-associated protein 73 (306 aa).

2 coiled-coil regions span residues 49–139 (LQAQ…QRLE) and 197–231 (QSEK…WESK).

This sequence belongs to the CFAP73 family.

It localises to the cytoplasm. Its subcellular location is the cytoskeleton. It is found in the cilium axoneme. May play a role in ciliary/flagellar motility by regulating the assembly and the activity of axonemal inner dynein arm. This is Cilia- and flagella-associated protein 73 from Mus musculus (Mouse).